Reading from the N-terminus, the 327-residue chain is Zinc transport protein ZntB (327 aa).

Over 1–273 (MEAIKGSDVN…ARRTYTMSLM (273 aa)) the chain is Cytoplasmic. A helical transmembrane segment spans residues 274–294 (AMVFLPSTFLTGLFGVNLGGI). At 295–300 (PGGGWR) the chain is on the periplasmic side. The helical transmembrane segment at 301-321 (FGFSLFCILLVVLIGGVTLWL) threads the bilayer. Residues 322-327 (HRSKWL) lie on the Cytoplasmic side of the membrane.

The protein belongs to the CorA metal ion transporter (MIT) (TC 1.A.35) family.

It is found in the cell inner membrane. It catalyses the reaction Zn(2+)(out) + H(+)(out) = Zn(2+)(in) + H(+)(in). Its function is as follows. Zinc transporter. Acts as a Zn(2+):proton symporter, which likely mediates zinc ion uptake. This is Zinc transport protein ZntB from Salmonella enteritidis PT4 (strain P125109).